The following is a 91-amino-acid chain: Heat shock protein 30E (91 aa).

The tract at residues 62 to 91 (RDQIRQPGAPESEGTSPNTGKDGKDPGNSL) is disordered. Residues 82–91 (KDGKDPGNSL) show a composition bias toward basic and acidic residues.

It belongs to the small heat shock protein (HSP20) family.

This chain is Heat shock protein 30E (hsp30e), found in Xenopus laevis (African clawed frog).